A 322-amino-acid polypeptide reads, in one-letter code: MRPEAQAGHLPVSQSPAVHLPVLYTQVLEGLRVIENGRYLDGTFGRGGHARGVLTQLGPEGRLLVMDKDPEAIAVAERDFAPDPRVSIFRGSFAQLLQWDATAEGLDGVLFDLGVSSPQLDVAERGFSFGKDGPLDMRMDPDSGESAAQWINRVEDREIADVLWTYGEERQSRRIARAIVARREKQPFSRTAELAELIASVMPRGKDKIHPATRSFQAIRIHINRELADLEAGLDAAVERLKPGGRLAIISFHSLEDRIVKQYMNRLAKAPPANRRLPEAEVFVPTLDLIGGAIKATDEELAANPRARSAVLRVAQKREADA.

Residues 47 to 49, D67, F93, D112, and Q119 contribute to the S-adenosyl-L-methionine site; that span reads GGH.

Belongs to the methyltransferase superfamily. RsmH family.

The protein localises to the cytoplasm. It catalyses the reaction cytidine(1402) in 16S rRNA + S-adenosyl-L-methionine = N(4)-methylcytidine(1402) in 16S rRNA + S-adenosyl-L-homocysteine + H(+). In terms of biological role, specifically methylates the N4 position of cytidine in position 1402 (C1402) of 16S rRNA. The protein is Ribosomal RNA small subunit methyltransferase H of Stenotrophomonas maltophilia (strain R551-3).